Reading from the N-terminus, the 237-residue chain is Cysteine-rich venom protein DIS2 (237 aa).

The N-terminal stretch at Met1 to Gly18 is a signal peptide. One can recognise an SCP domain in the interval Val37–Tyr165. 7 cysteine pairs are disulfide-bonded: Cys74–Cys152, Cys91–Cys166, Cys147–Cys163, Cys185–Cys192, Cys188–Cys197, Cys201–Cys234, and Cys219–Cys232. The region spanning Cys201–Cys234 is the ShKT domain.

The protein belongs to the CRISP family. In terms of tissue distribution, expressed by the venom gland.

It localises to the secreted. Its function is as follows. Weakly blocks contraction of smooth muscle elicited by high potassium-induced depolarization, but does not block caffeine-stimulated contraction. May target voltage-gated calcium channels on smooth muscle. The sequence is that of Cysteine-rich venom protein DIS2 from Dispholidus typus (Boomslang).